The chain runs to 324 residues: Probable acrylyl-CoA reductase AcuI (324 aa).

Residues Tyr41, 156 to 159 (SGGV), 178 to 180 (SGR), Arg198, Leu242, Ile256, Ser267, and Asn313 contribute to the NADP(+) site.

This sequence belongs to the zinc-containing alcohol dehydrogenase family. Acrylyl-CoA reductase subfamily. As to quaternary structure, homodimer.

The protein resides in the cytoplasm. It catalyses the reaction propanoyl-CoA + NADP(+) = acryloyl-CoA + NADPH + H(+). In terms of biological role, probably catalyzes the NADPH-dependent reduction of acrylyl-CoA to propanoyl-CoA. This is Probable acrylyl-CoA reductase AcuI (acuI) from Escherichia coli (strain K12).